The chain runs to 485 residues: Anthranilate synthase component I-like protein (485 aa).

L-tryptophan contacts are provided by residues Ser-69 and 271-273; that span reads PFA. Residue 306-307 participates in chorismate binding; it reads GT. Position 333 (Glu-333) interacts with Mg(2+). Residues Arg-441, 455–457, and Gly-457 contribute to the chorismate site; that span reads GAG. Residue Glu-470 participates in Mg(2+) binding.

The protein belongs to the anthranilate synthase component I family. Tetramer of two components I and two components II. Requires Mg(2+) as cofactor.

The enzyme catalyses chorismate + L-glutamine = anthranilate + pyruvate + L-glutamate + H(+). It participates in amino-acid biosynthesis; L-tryptophan biosynthesis; L-tryptophan from chorismate: step 1/5. The polypeptide is Anthranilate synthase component I-like protein (trpE2) (Synechocystis sp. (strain ATCC 27184 / PCC 6803 / Kazusa)).